The following is a 376-amino-acid chain: Cytoplasmic tRNA 2-thiolation protein 1 (376 aa).

This sequence belongs to the TtcA family. CTU1/NCS6/ATPBD3 subfamily.

It localises to the cytoplasm. It participates in tRNA modification; 5-methoxycarbonylmethyl-2-thiouridine-tRNA biosynthesis. Plays a central role in 2-thiolation of mcm(5)S(2)U at tRNA wobble positions of tRNA(Lys), tRNA(Glu) and tRNA(Gln). Directly binds tRNAs and probably acts by catalyzing adenylation of tRNAs, an intermediate required for 2-thiolation. It is unclear whether it acts as a sulfurtransferase that transfers sulfur from thiocarboxylated URM1 onto the uridine of tRNAs at wobble position. Prior mcm(5) tRNA modification by the elongator complex is required for 2-thiolation. May also be involved in protein urmylation. This is Cytoplasmic tRNA 2-thiolation protein 1 from Scheffersomyces stipitis (strain ATCC 58785 / CBS 6054 / NBRC 10063 / NRRL Y-11545) (Yeast).